The sequence spans 227 residues: Enolase-phosphatase E1 (227 aa).

Mg(2+)-binding residues include Asp11 and Glu13. Substrate contacts are provided by residues 118–119 (SS) and Lys161. Mg(2+) is bound at residue Asp186.

Belongs to the HAD-like hydrolase superfamily. MasA/MtnC family. As to quaternary structure, monomer. The cofactor is Mg(2+).

It is found in the cytoplasm. The protein resides in the nucleus. It carries out the reaction 5-methylsulfanyl-2,3-dioxopentyl phosphate + H2O = 1,2-dihydroxy-5-(methylsulfanyl)pent-1-en-3-one + phosphate. The protein operates within amino-acid biosynthesis; L-methionine biosynthesis via salvage pathway; L-methionine from S-methyl-5-thio-alpha-D-ribose 1-phosphate: step 3/6. Its pathway is amino-acid biosynthesis; L-methionine biosynthesis via salvage pathway; L-methionine from S-methyl-5-thio-alpha-D-ribose 1-phosphate: step 4/6. Functionally, bifunctional enzyme that catalyzes the enolization of 2,3-diketo-5-methylthiopentyl-1-phosphate (DK-MTP-1-P) into the intermediate 2-hydroxy-3-keto-5-methylthiopentenyl-1-phosphate (HK-MTPenyl-1-P), which is then dephosphorylated to form the acireductone 1,2-dihydroxy-3-keto-5-methylthiopentene (DHK-MTPene). The chain is Enolase-phosphatase E1 from Saccharomyces cerevisiae (strain YJM789) (Baker's yeast).